Here is a 498-residue protein sequence, read N- to C-terminus: Signal recognition particle receptor FtsY (498 aa).

Disordered regions lie at residues 1–130 and 147–200; these read MGLF…PNQS and KVES…YNRS. Residues 36–46 are compositionally biased toward low complexity; it reads ALLAETAETAE. Over residues 103–120 the composition is skewed to polar residues; sequence SENSVAAVQNNTETMPSQ. Residues 301 to 308, 383 to 387, and 447 to 450 contribute to the GTP site; these read GVNGVGKT, DTAGR, and TKID.

Belongs to the GTP-binding SRP family. FtsY subfamily. As to quaternary structure, part of the signal recognition particle protein translocation system, which is composed of SRP and FtsY.

The protein resides in the cell membrane. It localises to the cytoplasm. It carries out the reaction GTP + H2O = GDP + phosphate + H(+). Involved in targeting and insertion of nascent membrane proteins into the cytoplasmic membrane. Acts as a receptor for the complex formed by the signal recognition particle (SRP) and the ribosome-nascent chain (RNC). The polypeptide is Signal recognition particle receptor FtsY (Streptococcus mutans serotype c (strain ATCC 700610 / UA159)).